Here is a 485-residue protein sequence, read N- to C-terminus: NADH-quinone oxidoreductase subunit N (485 aa).

14 helical membrane passes run 8–28 (LIAL…MLSI), 35–55 (FLNA…LWFV), 71–91 (GFAM…CTFA), 105–125 (FYLL…ANHL), 127–147 (ALFL…GYAF), 159–179 (YTIL…LVYA), 203–223 (LLAG…LVPF), 235–255 (PAPV…GVVM), 271–291 (VVLG…ALSQ), 297–317 (LLGY…IVLQ), 326–346 (VGVY…VVSL), 373–393 (AAVM…LGFI), 408–430 (WWLV…RVAV), and 455–475 (IVVL…QPLI).

It belongs to the complex I subunit 2 family. In terms of assembly, NDH-1 is composed of 13 different subunits. Subunits NuoA, H, J, K, L, M, N constitute the membrane sector of the complex.

The protein resides in the cell inner membrane. The enzyme catalyses a quinone + NADH + 5 H(+)(in) = a quinol + NAD(+) + 4 H(+)(out). Its function is as follows. NDH-1 shuttles electrons from NADH, via FMN and iron-sulfur (Fe-S) centers, to quinones in the respiratory chain. The immediate electron acceptor for the enzyme in this species is believed to be ubiquinone. Couples the redox reaction to proton translocation (for every two electrons transferred, four hydrogen ions are translocated across the cytoplasmic membrane), and thus conserves the redox energy in a proton gradient. The chain is NADH-quinone oxidoreductase subunit N from Salmonella choleraesuis (strain SC-B67).